A 354-amino-acid chain; its full sequence is Rhodopsin (354 aa).

At 1–36 (MNGTEGPYFYIPMVNTTGIVRSPYEYPQYYLVNPAA) the chain is on the extracellular side. Residues N2 and N15 are each glycosylated (N-linked (GlcNAc...) asparagine). A helical membrane pass occupies residues 37-61 (YAALGAYMFFLILLGFPINFLTLYV). Residues 62–73 (TLEHKKLRTPLN) are Cytoplasmic-facing. A helical transmembrane segment spans residues 74-96 (YILLNLAVADLFMVFGGFTTTMY). At 97–110 (TSMHGYFVLGRLGC) the chain is on the extracellular side. An intrachain disulfide couples C110 to C187. A helical transmembrane segment spans residues 111-133 (NLEGFFATLGGEIGLWSLVVLAI). The 'Ionic lock' involved in activated form stabilization signature appears at 134 to 136 (ERW). Residues 134-152 (ERWVVVCKPISNFRFGENH) lie on the Cytoplasmic side of the membrane. The helical transmembrane segment at 153-173 (AIMGLAFTWIMACACAVPPLV) threads the bilayer. The Extracellular portion of the chain corresponds to 174-202 (GWSRYIPEGMQCSCGVDYYTRAEGFNNES). N200 carries an N-linked (GlcNAc...) asparagine glycan. A helical membrane pass occupies residues 203–224 (FVVYMFTCHFCIPLTIIGFCYG). Residues 225–252 (RLLCAVKEAAAAQQESETTQRAEREVTR) are Cytoplasmic-facing. The helical transmembrane segment at 253-274 (MVILMVVGFLVCWLPYASVAWY) threads the bilayer. Residues 275 to 286 (IFSNQGSQFGPL) lie on the Extracellular side of the membrane. A helical transmembrane segment spans residues 287–308 (FMTIPAFFAKSSSVYNPMIYIC). K296 is subject to N6-(retinylidene)lysine. At 309 to 354 (MNKQFRHCMITTLCCGKNPFEEEEGASTTASKTEASSVSSSSVSPA) the chain is on the cytoplasmic side. Residues C322 and C323 are each lipidated (S-palmitoyl cysteine). The disordered stretch occupies residues 333-354 (GASTTASKTEASSVSSSSVSPA). Positions 334–354 (ASTTASKTEASSVSSSSVSPA) are enriched in low complexity.

Belongs to the G-protein coupled receptor 1 family. Opsin subfamily. In terms of processing, phosphorylated on some or all of the serine and threonine residues present in the C-terminal region. Contains one covalently linked retinal chromophore.

It is found in the membrane. It localises to the cell projection. Its subcellular location is the cilium. The protein resides in the photoreceptor outer segment. Its function is as follows. Photoreceptor required for image-forming vision at low light intensity. While most salt water fish species use retinal as chromophore, most freshwater fish use 3-dehydroretinal, or a mixture of retinal and 3-dehydroretinal. Light-induced isomerization of 11-cis to all-trans retinal triggers a conformational change that activates signaling via G-proteins. Subsequent receptor phosphorylation mediates displacement of the bound G-protein alpha subunit by arrestin and terminates signaling. The polypeptide is Rhodopsin (rho) (Salaria pavo (Peacock blenny)).